The primary structure comprises 70 residues: Beta-defensin 107 (70 aa).

An N-terminal signal peptide occupies residues 1-26 (MPGAMKIFVFILAALILLAQIFQART). Cystine bridges form between C41-C55 and C45-C64.

This sequence belongs to the beta-defensin family. As to expression, specifically expressed in testis.

The protein localises to the secreted. Functionally, has antibacterial activity. This is Beta-defensin 107 (DEFB107A) from Homo sapiens (Human).